We begin with the raw amino-acid sequence, 361 residues long: Chorismate synthase (361 aa).

Positions 48 and 54 each coordinate NADP(+). FMN is bound by residues 125–127 (RSS), 238–239 (NA), glycine 278, 293–297 (KPTSS), and arginine 319.

Belongs to the chorismate synthase family. Homotetramer. FMNH2 serves as cofactor.

The catalysed reaction is 5-O-(1-carboxyvinyl)-3-phosphoshikimate = chorismate + phosphate. The protein operates within metabolic intermediate biosynthesis; chorismate biosynthesis; chorismate from D-erythrose 4-phosphate and phosphoenolpyruvate: step 7/7. In terms of biological role, catalyzes the anti-1,4-elimination of the C-3 phosphate and the C-6 proR hydrogen from 5-enolpyruvylshikimate-3-phosphate (EPSP) to yield chorismate, which is the branch point compound that serves as the starting substrate for the three terminal pathways of aromatic amino acid biosynthesis. This reaction introduces a second double bond into the aromatic ring system. In Vibrio vulnificus (strain CMCP6), this protein is Chorismate synthase.